The primary structure comprises 326 residues: GTPase IMAP family member 5 (326 aa).

The Cytoplasmic segment spans residues 1–297; sequence MEDHGFEELS…MLCRVTSCLD (297 aa). An AIG1-type G domain is found at 42 to 245; sequence SGLLRILLVG…HSNDLFVYTQ (204 aa). Residues 51-59, S72, 169-171, and N206 each bind GTP; these read GKSGCGKSA and HKE. Residues 298-318 form a helical; Anchor for type IV membrane protein membrane-spanning segment; it reads WHIAVSVLLIVLGLTLLITLI. Residues 319-326 lie on the Lumenal side of the membrane; it reads NMYIGRWK.

This sequence belongs to the TRAFAC class TrmE-Era-EngA-EngB-Septin-like GTPase superfamily. AIG1/Toc34/Toc159-like paraseptin GTPase family. IAN subfamily. Interacts with BAD, BAK1, BAX, BCL2, BCL2L1/Bcl-xL and BCL2L11/BimEL. The interaction with BAX is increased, when cells initiate apoptosis upon IL2 withdrawal. Forms a complex with BCL2L1 or MCL1 and HSPA8/HSC70; the interaction between HSPA8 and BCL2L1 or MCL1 is impaired in the absence of GIMAP5. May interact (via N-terminus) with microtubules. In terms of tissue distribution, primarily expressed in spleen, heart, lung and intestine and, at lower levels, in kidney, stomach and muscle. Expressed in thymus and lymph nodes (at protein level). In the spleen, expressed in periarteriolar lymphatic sheets. Isoform 2: Expressed at higher levels in T lymphocytes compared to isoform 1.

It is found in the lysosome membrane. It localises to the endosome. The protein localises to the multivesicular body membrane. Its subcellular location is the endosome membrane. In terms of biological role, required for mitochondrial integrity and T-cell survival. May contribute to T-cell quiescence. Plays a role in T lymphocyte development and the optimal generation of CD4/CD8 double-positive thymocytes. Inhibitor of GSK3A, possibly by sequestering GSK3A in cytoplasmic vesicles and impairing its translocation to the nucleus. Consequently, impairs GSK3A-dependent transcriptional program and regulation of the DNA damage response occurring during T cells proliferation. Required for the survival of peripheral T cells, natural killer (NK) and NK T-cell development and the maintenance of normal liver function. Promotes the survival of quiescent T-cells. May regulate Ca(2+) homeostasis by modulating lysosomal Ca(2+) stores, preventing its accumulation in the absence of T cell activation. May play a role in mitochondrial DNA segregation in hematopoietic tissues. Is a regulator of liver endothelial cell homeostasis. The sequence is that of GTPase IMAP family member 5 (Gimap5) from Rattus norvegicus (Rat).